The sequence spans 92 residues: Small ribosomal subunit protein uS19 (92 aa).

Belongs to the universal ribosomal protein uS19 family.

Protein S19 forms a complex with S13 that binds strongly to the 16S ribosomal RNA. The polypeptide is Small ribosomal subunit protein uS19 (Brucella anthropi (strain ATCC 49188 / DSM 6882 / CCUG 24695 / JCM 21032 / LMG 3331 / NBRC 15819 / NCTC 12168 / Alc 37) (Ochrobactrum anthropi)).